An 804-amino-acid chain; its full sequence is Leucine--tRNA ligase (804 aa).

The short motif at 40 to 51 is the 'HIGH' region element; sequence PYPSGAGLHVGH. Residues 576 to 580 carry the 'KMSKS' region motif; that stretch reads KMSKS. Residue lysine 579 coordinates ATP.

Belongs to the class-I aminoacyl-tRNA synthetase family.

It localises to the cytoplasm. It carries out the reaction tRNA(Leu) + L-leucine + ATP = L-leucyl-tRNA(Leu) + AMP + diphosphate. In Bacillus velezensis (strain DSM 23117 / BGSC 10A6 / LMG 26770 / FZB42) (Bacillus amyloliquefaciens subsp. plantarum), this protein is Leucine--tRNA ligase.